The chain runs to 210 residues: Urease accessory protein UreE (210 aa).

Residues 144–210 (PEGGAYAAGG…GHAHPHSLAR (67 aa)) are disordered. Over residues 156–202 (HGHDHPHHDHGHDHAHAHAHGTEACDHEHSHDHDCGHHHDHGQDYGH) the composition is skewed to basic and acidic residues.

It belongs to the UreE family.

It is found in the cytoplasm. In terms of biological role, involved in urease metallocenter assembly. Binds nickel. Probably functions as a nickel donor during metallocenter assembly. In Paracidovorax citrulli (strain AAC00-1) (Acidovorax citrulli), this protein is Urease accessory protein UreE.